The sequence spans 309 residues: Homoserine O-succinyltransferase (309 aa).

Cys142 acts as the Acyl-thioester intermediate in catalysis. Residues Lys163 and Ser192 each coordinate substrate. His235 functions as the Proton acceptor in the catalytic mechanism. Glu237 is an active-site residue. Position 249 (Arg249) interacts with substrate.

It belongs to the MetA family.

Its subcellular location is the cytoplasm. It catalyses the reaction L-homoserine + succinyl-CoA = O-succinyl-L-homoserine + CoA. Its pathway is amino-acid biosynthesis; L-methionine biosynthesis via de novo pathway; O-succinyl-L-homoserine from L-homoserine: step 1/1. Functionally, transfers a succinyl group from succinyl-CoA to L-homoserine, forming succinyl-L-homoserine. The chain is Homoserine O-succinyltransferase from Yersinia enterocolitica serotype O:8 / biotype 1B (strain NCTC 13174 / 8081).